A 1250-amino-acid chain; its full sequence is Bifunctional autolysin (1250 aa).

An N-terminal signal peptide occupies residues 1-29; that stretch reads MAKKFNYKLPSMVALTLVGSAVTAHQVQA. The segment covering 103 to 138 has biased composition (polar residues); that stretch reads GDTRANQSATTNNTQPVAKSTSTTAPKTNTNVTNAG. Disordered stretches follow at residues 103-151 and 173-219; these read GDTR…NSEN and AAAP…KYKP. The span at 173 to 196 shows a compositional bias: low complexity; that stretch reads AAAPKAATTSAPKAKTEATPKVTT. An N-acetylmuramoyl-L-alanine amidase region spans residues 199 to 769; sequence ASAQPRSVAA…AVAQPKTAVK (571 aa). 7 GW domains span residues 437–511, 513–587, 606–680, 682–756, 778–853, 855–930, and 937–1011; these read TVAA…YNTA, SPVN…DTAK, TVSS…YNNA, SPVN…VPAA, TTQT…VQNL, KEVK…APTA, and AAKD…KELI. The segment at 770 to 1250 is endo-beta-N-acetylglucosaminidase; it reads AYTVTKPQTT…GKYFDIPQYK (481 aa).

The protein in the N-terminal section; belongs to the N-acetylmuramoyl-L-alanine amidase 2 family. It in the C-terminal section; belongs to the glycosyl hydrolase 73 family. In terms of assembly, oligomer; forms a ring structure at the cell surface which is important for efficient partitioning of daughter cells after cell division. In terms of processing, undergoes proteolytic processing to generate the two extracellular lytic enzymes, probably at the septal region on the cell surface.

The protein resides in the secreted. The enzyme catalyses Hydrolyzes the link between N-acetylmuramoyl residues and L-amino acid residues in certain cell-wall glycopeptides.. It catalyses the reaction an N(4)-(oligosaccharide-(1-&gt;3)-[oligosaccharide-(1-&gt;6)]-beta-D-Man-(1-&gt;4)-beta-D-GlcNAc-(1-&gt;4)-alpha-D-GlcNAc)-L-asparaginyl-[protein] + H2O = an oligosaccharide-(1-&gt;3)-[oligosaccharide-(1-&gt;6)]-beta-D-Man-(1-&gt;4)-D-GlcNAc + N(4)-(N-acetyl-beta-D-glucosaminyl)-L-asparaginyl-[protein]. In terms of biological role, endohydrolysis of the di-N-acetylchitobiosyl unit in high-mannose glycopeptides and glycoproteins containing the -[(Man)5(GlcNAc)2]-Asn structure. One N-acetyl-D-glucosamine residue remains attached to the protein; the rest of the oligosaccharide is released intact. Cleaves the peptidoglycan connecting the daughter cells at the end of the cell division cycle, resulting in the separation of the two newly divided cells. Acts as an autolysin in penicillin-induced lysis. In Staphylococcus aureus (strain MSSA476), this protein is Bifunctional autolysin (atl).